The following is a 559-amino-acid chain: Glutamine--tRNA ligase (559 aa).

Residues 44–54 carry the 'HIGH' region motif; it reads PEPNGYLHIGH. Residues 45-47 and 51-57 each bind ATP; these read EPN and HIGHAKS. L-glutamine-binding residues include aspartate 77 and tyrosine 222. Residues threonine 241 and 272–273 each bind ATP; that span reads RL. The 'KMSKS' region motif lies at 279–283; sequence LTSKR.

The protein belongs to the class-I aminoacyl-tRNA synthetase family. In terms of assembly, monomer.

The protein localises to the cytoplasm. The catalysed reaction is tRNA(Gln) + L-glutamine + ATP = L-glutaminyl-tRNA(Gln) + AMP + diphosphate. The polypeptide is Glutamine--tRNA ligase (Pasteurella multocida (strain Pm70)).